A 265-amino-acid chain; its full sequence is Tryptophan synthase alpha chain (265 aa).

Residues glutamate 49 and glutamate 60 each act as proton acceptor in the active site.

The protein belongs to the TrpA family. As to quaternary structure, tetramer of two alpha and two beta chains.

It carries out the reaction (1S,2R)-1-C-(indol-3-yl)glycerol 3-phosphate + L-serine = D-glyceraldehyde 3-phosphate + L-tryptophan + H2O. The protein operates within amino-acid biosynthesis; L-tryptophan biosynthesis; L-tryptophan from chorismate: step 5/5. Its function is as follows. The alpha subunit is responsible for the aldol cleavage of indoleglycerol phosphate to indole and glyceraldehyde 3-phosphate. In Herminiimonas arsenicoxydans, this protein is Tryptophan synthase alpha chain.